A 279-amino-acid polypeptide reads, in one-letter code: MAGRGGMVEWEVGRRRDSEDVIVLSPGPPARRRPPPVKAVEPESGGFAYEPPEKLFYKTRVCETFVTSGRCMFEDGCTFAHGDEELRPSLTACAGGWRKPSPSLSAAAPPVAVAPTPPPAQVVHELLARGSGSGGGGHRAITKVCFEFRDKGICYFGETCAFPHVSAAEIRQGSRLSSMSSSSWEMPARRSVAVTVPRTFVSVPPVAPPPPPPHYRVNNSSSYNAASMAAAAPAASDANLVAQQPPPEQGGRKMTRLEMLSLKKMTGIYGDWLEGYEHP.

A disordered region spans residues 20–45 (DVIVLSPGPPARRRPPPVKAVEPESG). 2 C3H1-type zinc fingers span residues 56–84 (FYKTRVCETFVTSGRCMFEDGCTFAHGDE) and 139–167 (RAITKVCFEFRDKGICYFGETCAFPHVSA).

This is Zinc finger CCCH domain-containing protein 1 from Oryza sativa subsp. japonica (Rice).